The sequence spans 333 residues: Phosphate acetyltransferase (333 aa).

It belongs to the phosphate acetyltransferase and butyryltransferase family. As to quaternary structure, homodimer.

It is found in the cell membrane. The catalysed reaction is acetyl-CoA + phosphate = acetyl phosphate + CoA. It functions in the pathway metabolic intermediate biosynthesis; acetyl-CoA biosynthesis; acetyl-CoA from acetate: step 2/2. The sequence is that of Phosphate acetyltransferase (pta) from Methanosarcina thermophila.